The primary structure comprises 183 residues: Dual-action ribosomal maturation protein DarP (183 aa).

The protein belongs to the DarP family.

The protein localises to the cytoplasm. Functionally, member of a network of 50S ribosomal subunit biogenesis factors which assembles along the 30S-50S interface, preventing incorrect 23S rRNA structures from forming. Promotes peptidyl transferase center (PTC) maturation. The polypeptide is Dual-action ribosomal maturation protein DarP (Escherichia coli O7:K1 (strain IAI39 / ExPEC)).